A 459-amino-acid polypeptide reads, in one-letter code: Alcohol acyl transferase 1 allele GSa (459 aa).

Active-site proton acceptor residues include His-164 and Asn-385.

Belongs to the plant acyltransferase family. As to expression, highly expressed in the cortex and skin of ripe fruit.

It catalyses the reaction butan-1-ol + acetyl-CoA = butyl acetate + CoA. The enzyme catalyses butan-1-ol + butanoyl-CoA = butyl butanoate + CoA. The catalysed reaction is butan-1-ol + hexanoyl-CoA = butyl hexanoate + CoA. It carries out the reaction hexan-1-ol + butanoyl-CoA = hexyl butanoate + CoA. It catalyses the reaction hexan-1-ol + acetyl-CoA = hexyl acetate + CoA. The enzyme catalyses 2-methylbutan-1-ol + butanoyl-CoA = 2-methylbutyl butanoate + CoA. The catalysed reaction is ethanol + butanoyl-CoA = ethyl butanoate + CoA. It carries out the reaction hexanoyl-CoA + ethanol = ethyl hexanoate + CoA. In terms of biological role, involved in the biosynthesis of volatile esters which confer ripe apple fruit flavor. Alcohol acyl transferase that can use a wide range of alcohols as substrate, including 2-methylbutanol, hexanol and ethanol, to produce esters such as butyl butanoate, butyl hexanoate, hexyl butanoate, ethyl butanoate and ethyl hexanoate and, to some extent, 2-methylbutyl acetate (2MBA), butyl acetate, hexyl acetate and 2-methylbutyl butanoate (2MBB). In Malus domestica (Apple), this protein is Alcohol acyl transferase 1 allele GSa.